Here is a 449-residue protein sequence, read N- to C-terminus: TNF receptor-associated factor family protein DDB_G0272340 (449 aa).

An RING-type; degenerate zinc finger spans residues 33 to 76; the sequence is CPICEECIMDVNKCEALQCKEGHVHCRLCWMKSLESKKECMTCR. 2 consecutive TRAF-type zinc fingers follow at residues 133–187 and 189–251; these read GHIK…IDDS and VHYS…SELS. Residues 263-309 adopt a coiled-coil conformation; the sequence is MEATIDQHICKFEKSEKEYKKLELEYNRLKDDFKILQSELKVIRELK. In terms of domain architecture, MATH spans 311-437; the sequence is NYQNKWVITN…QNSVTLNINI (127 aa).

Belongs to the TNF receptor-associated factor family. A subfamily.

The protein resides in the cytoplasm. Probable adapter protein and signal transducer that links members of the tumor necrosis factor receptor family to different signaling pathways by association with the receptor cytoplasmic domain and kinases. This is TNF receptor-associated factor family protein DDB_G0272340 from Dictyostelium discoideum (Social amoeba).